The sequence spans 329 residues: Acrosin (329 aa).

Positions 1–17 (MLPTAVLLVLAVSVVAR) are cleaved as a signal peptide. N19 carries an N-linked (GlcNAc...) asparagine glycan. Disulfide bonds link C22–C152, C26–C160, C71–C87, C175–C244, C207–C223, and C234–C264. In terms of domain architecture, Peptidase S1 spans 40–288 (IIGGQDAAHG…YLNWIASKIG (249 aa)). Residues H86 and D140 each act as charge relay system in the active site. The N-linked (GlcNAc...) asparagine glycan is linked to N208. S238 serves as the catalytic Charge relay system.

Belongs to the peptidase S1 family. In terms of assembly, heavy chain (catalytic) and a light chain linked by two disulfide bonds. Forms a heterodimer with SERPINA5.

The catalysed reaction is Preferential cleavage: Arg-|-Xaa, Lys-|-Xaa.. Its activity is regulated as follows. Inhibited by SERPINA5. In terms of biological role, acrosin is the major protease of mammalian spermatozoa. It is a serine protease of trypsin-like cleavage specificity, it is synthesized in a zymogen form, proacrosin and stored in the acrosome. This chain is Acrosin (ACR), found in Ovis aries (Sheep).